Here is a 323-residue protein sequence, read N- to C-terminus: tRNA U34 carboxymethyltransferase (323 aa).

Carboxy-S-adenosyl-L-methionine is bound by residues lysine 91, tryptophan 105, lysine 110, glycine 130, 152–154 (DPS), 181–182 (IE), methionine 196, tyrosine 200, and arginine 315.

It belongs to the class I-like SAM-binding methyltransferase superfamily. CmoB family. In terms of assembly, homotetramer.

The catalysed reaction is carboxy-S-adenosyl-L-methionine + 5-hydroxyuridine(34) in tRNA = 5-carboxymethoxyuridine(34) in tRNA + S-adenosyl-L-homocysteine + H(+). Its function is as follows. Catalyzes carboxymethyl transfer from carboxy-S-adenosyl-L-methionine (Cx-SAM) to 5-hydroxyuridine (ho5U) to form 5-carboxymethoxyuridine (cmo5U) at position 34 in tRNAs. This Vibrio parahaemolyticus serotype O3:K6 (strain RIMD 2210633) protein is tRNA U34 carboxymethyltransferase.